We begin with the raw amino-acid sequence, 807 residues long: Nucleolar complex protein 3 homolog (807 aa).

Disordered regions lie at residues 27–93 (KLKN…DMMD) and 167–191 (EKPVTDVQQEEEAEEELEDEEEVIE). Residues 40–51 (KKYRKEQRKLRQ) are compositionally biased toward basic residues. The segment covering 52-78 (AVKDAVSKKPIPLEDPKSKRPVKRMER) has biased composition (basic and acidic residues). Acidic residues-rich tracts occupy residues 79 to 93 (EEDEEEEALPLDMMD) and 174 to 190 (QQEEEAEEELEDEEEVI). Lys332 is covalently cross-linked (Glycyl lysine isopeptide (Lys-Gly) (interchain with G-Cter in SUMO2)). Residues 449-489 (FKEKRKTLSRMQRKWKKAEEKLERELREAEASESTEKKLKL) are a coiled coil.

This sequence belongs to the CBF/MAK21 family.

It localises to the nucleus. The protein localises to the nucleolus. It is found in the nucleus speckle. May be required for adipogenesis. The polypeptide is Nucleolar complex protein 3 homolog (Noc3l) (Mus musculus (Mouse)).